Reading from the N-terminus, the 264-residue chain is ATP synthase subunit a (264 aa).

6 helical membrane-spanning segments follow: residues 29–49, 90–110, 134–154, 177–197, 208–228, and 235–255; these read TWHI…LWIF, IAPL…MDMI, DVNI…FYSI, IPVN…SLAL, LIFI…TLGV, and LIFH…LTIV.

The protein belongs to the ATPase A chain family. As to quaternary structure, F-type ATPases have 2 components, CF(1) - the catalytic core - and CF(0) - the membrane proton channel. CF(1) has five subunits: alpha(3), beta(3), gamma(1), delta(1), epsilon(1). CF(0) has three main subunits: a(1), b(2) and c(9-12). The alpha and beta chains form an alternating ring which encloses part of the gamma chain. CF(1) is attached to CF(0) by a central stalk formed by the gamma and epsilon chains, while a peripheral stalk is formed by the delta and b chains.

It is found in the cell inner membrane. In terms of biological role, key component of the proton channel; it plays a direct role in the translocation of protons across the membrane. The polypeptide is ATP synthase subunit a (Shewanella baltica (strain OS223)).